A 42-amino-acid chain; its full sequence is Cytochrome b559 subunit beta (42 aa).

Residues 17–33 traverse the membrane as a helical segment; that stretch reads WLSIHALAVPTVFFLGA. His21 serves as a coordination point for heme.

The protein belongs to the PsbE/PsbF family. Heterodimer of an alpha subunit and a beta subunit. PSII is composed of 1 copy each of membrane proteins PsbA, PsbB, PsbC, PsbD, PsbE, PsbF, PsbH, PsbI, PsbJ, PsbK, PsbL, PsbM, PsbT, PsbX, PsbY, PsbZ, Psb30/Ycf12, at least 3 peripheral proteins of the oxygen-evolving complex and a large number of cofactors. It forms dimeric complexes. Heme b serves as cofactor.

It localises to the plastid. The protein localises to the chloroplast thylakoid membrane. This b-type cytochrome is tightly associated with the reaction center of photosystem II (PSII). PSII is a light-driven water:plastoquinone oxidoreductase that uses light energy to abstract electrons from H(2)O, generating O(2) and a proton gradient subsequently used for ATP formation. It consists of a core antenna complex that captures photons, and an electron transfer chain that converts photonic excitation into a charge separation. This chain is Cytochrome b559 subunit beta, found in Tupiella akineta (Green alga).